Reading from the N-terminus, the 312-residue chain is Taste receptor type 2 member 135 (312 aa).

Residues 1 to 19 (MSTGHTVLGCQTTDKTVVT) are Extracellular-facing. The helical transmembrane segment at 20-40 (LFIILVLLCLVAVVGNGFIII) threads the bilayer. The Cytoplasmic segment spans residues 41-66 (ALGMKWLLRRTLSAHNKLLISLAASR). The helical transmembrane segment at 67–87 (FCLQCVVIGKNIYVFLNPTSF) threads the bilayer. The Extracellular segment spans residues 88 to 97 (PYNPVIQLLN). Residues 98–118 (LMWDFLTAATIWLCSLLGFFY) traverse the membrane as a helical segment. Topologically, residues 119–140 (CVKIATLTHPVFVWLKYRLPGW) are cytoplasmic. A helical membrane pass occupies residues 141 to 161 (VPWMLLSAVGMSSLTSILCFI). The Extracellular portion of the chain corresponds to 162–198 (GNYMIYQNHAKSGHQPWNVTGNSLRHSLEKFYFFSIK). N-linked (GlcNAc...) asparagine glycosylation occurs at Asn179. The helical transmembrane segment at 199-219 (IIMWTIPTVVFSIFMSLLLVS) threads the bilayer. The Cytoplasmic segment spans residues 220 to 244 (LVRHMKKTFLALSELRDVWAQAHFK). A helical membrane pass occupies residues 245-265 (ALLPLLSFIVLFISCFLTLVL). At 266–277 (SSASNTPYQEFR) the chain is on the extracellular side. Residues 278–298 (YWMWQVVIHLCTVIHPIVILF) form a helical membrane-spanning segment. The Cytoplasmic portion of the chain corresponds to 299–312 (SNPVLRVVIKRGCC).

The protein belongs to the G-protein coupled receptor T2R family.

It is found in the membrane. Its function is as follows. Putative taste receptor which may play a role in the perception of bitterness. The chain is Taste receptor type 2 member 135 (Tas2r135) from Mus musculus (Mouse).